The sequence spans 505 residues: 2,3-bisphosphoglycerate-independent phosphoglycerate mutase (505 aa).

Mn(2+) is bound by residues aspartate 12 and serine 62. Residue serine 62 is the Phosphoserine intermediate of the active site. Substrate is bound by residues histidine 123, 153-154, arginine 185, arginine 191, 257-260, and lysine 330; these read RD and RPDR. Residues aspartate 397, histidine 401, aspartate 438, histidine 439, and histidine 456 each contribute to the Mn(2+) site.

The protein belongs to the BPG-independent phosphoglycerate mutase family. Monomer. Requires Mn(2+) as cofactor.

It carries out the reaction (2R)-2-phosphoglycerate = (2R)-3-phosphoglycerate. The protein operates within carbohydrate degradation; glycolysis; pyruvate from D-glyceraldehyde 3-phosphate: step 3/5. In terms of biological role, catalyzes the interconversion of 2-phosphoglycerate and 3-phosphoglycerate. This is 2,3-bisphosphoglycerate-independent phosphoglycerate mutase from Staphylococcus aureus (strain COL).